The sequence spans 936 residues: Protein translocase subunit SecA (936 aa).

ATP contacts are provided by residues Gln90, Gly108–Thr112, and Asp499.

This sequence belongs to the SecA family. Monomer and homodimer. Part of the essential Sec protein translocation apparatus which comprises SecA, SecYEG and auxiliary proteins SecDF. Other proteins may also be involved.

It is found in the cell inner membrane. The protein resides in the cellular thylakoid membrane. It localises to the cytoplasm. The enzyme catalyses ATP + H2O + cellular proteinSide 1 = ADP + phosphate + cellular proteinSide 2.. Part of the Sec protein translocase complex. Interacts with the SecYEG preprotein conducting channel. Has a central role in coupling the hydrolysis of ATP to the transfer of proteins into and across the cell membrane, serving as an ATP-driven molecular motor driving the stepwise translocation of polypeptide chains across the membrane. Functionally, probably participates in protein translocation into and across both the cytoplasmic and thylakoid membranes in cyanobacterial cells. The polypeptide is Protein translocase subunit SecA (Trichodesmium erythraeum (strain IMS101)).